Consider the following 276-residue polypeptide: tRNA (guanine-N(7)-)-methyltransferase (276 aa).

The interval 1-23 (MRPDPAPLDPTDASPAQARRHQP) is disordered. The S-adenosyl-L-methionine site is built by Glu-103, Glu-128, Asp-155, and Asp-178. Asp-178 is a catalytic residue. Substrate is bound by residues Lys-182, Asp-214, and 252–255 (TRYE).

This sequence belongs to the class I-like SAM-binding methyltransferase superfamily. TrmB family.

The catalysed reaction is guanosine(46) in tRNA + S-adenosyl-L-methionine = N(7)-methylguanosine(46) in tRNA + S-adenosyl-L-homocysteine. The protein operates within tRNA modification; N(7)-methylguanine-tRNA biosynthesis. Its function is as follows. Catalyzes the formation of N(7)-methylguanine at position 46 (m7G46) in tRNA. The protein is tRNA (guanine-N(7)-)-methyltransferase of Cutibacterium acnes (strain DSM 16379 / KPA171202) (Propionibacterium acnes).